Here is a 284-residue protein sequence, read N- to C-terminus: Acetylglutamate kinase (284 aa).

Residues 64-65 (GG), R86, and N179 each bind substrate.

Belongs to the acetylglutamate kinase family. ArgB subfamily.

The protein resides in the cytoplasm. It carries out the reaction N-acetyl-L-glutamate + ATP = N-acetyl-L-glutamyl 5-phosphate + ADP. Its pathway is amino-acid biosynthesis; L-arginine biosynthesis; N(2)-acetyl-L-ornithine from L-glutamate: step 2/4. In terms of biological role, catalyzes the ATP-dependent phosphorylation of N-acetyl-L-glutamate. This Acaryochloris marina (strain MBIC 11017) protein is Acetylglutamate kinase.